The sequence spans 62 residues: Sperm protamine P1 (62 aa).

Residues M1–Y62 form a disordered region.

The protein belongs to the protamine P1 family. Testis.

It localises to the nucleus. The protein resides in the chromosome. Protamines substitute for histones in the chromatin of sperm during the haploid phase of spermatogenesis. They compact sperm DNA into a highly condensed, stable and inactive complex. This Petrogale xanthopus (Yellow-footed rock wallaby) protein is Sperm protamine P1 (PRM1).